We begin with the raw amino-acid sequence, 147 residues long: D-aminoacyl-tRNA deacylase (147 aa).

Residues glycine 136–proline 137 carry the Gly-cisPro motif, important for rejection of L-amino acids motif.

This sequence belongs to the DTD family. Homodimer.

Its subcellular location is the cytoplasm. The enzyme catalyses glycyl-tRNA(Ala) + H2O = tRNA(Ala) + glycine + H(+). It catalyses the reaction a D-aminoacyl-tRNA + H2O = a tRNA + a D-alpha-amino acid + H(+). Functionally, an aminoacyl-tRNA editing enzyme that deacylates mischarged D-aminoacyl-tRNAs. Also deacylates mischarged glycyl-tRNA(Ala), protecting cells against glycine mischarging by AlaRS. Acts via tRNA-based rather than protein-based catalysis; rejects L-amino acids rather than detecting D-amino acids in the active site. By recycling D-aminoacyl-tRNA to D-amino acids and free tRNA molecules, this enzyme counteracts the toxicity associated with the formation of D-aminoacyl-tRNA entities in vivo and helps enforce protein L-homochirality. This is D-aminoacyl-tRNA deacylase from Streptococcus dysgalactiae subsp. equisimilis (Streptococcus equisimilis).